The following is a 245-amino-acid chain: Phosducin (245 aa).

Residues 1-14 are compositionally biased toward acidic residues; the sequence is MEEAKSQSLEEDFE. Positions 1–68 are disordered; that stretch reads MEEAKSQSLE…RDNKDSKERF (68 aa). The Phosducin domain maps to 1 to 241; that stretch reads MEEAKSQSLE…THALDQTNME (241 aa). A compositionally biased stretch (basic and acidic residues) spans 59 to 68; the sequence is RDNKDSKERF. Ser-73 carries the phosphoserine; by PKA modification. A thioredoxin fold region spans residues 111-245; it reads YGFVYELETG…DQTNMEEDIE (135 aa).

This sequence belongs to the phosducin family. Interacts with CRX. Forms a complex with the beta and gamma subunits of the GTP-binding protein, transducin. Post-translationally, light-induced changes in cyclic nucleotide levels modulate the phosphorylation of this protein by cAMP kinase.

Its subcellular location is the cytoplasm. It localises to the cytosol. The protein resides in the nucleus. It is found in the cell projection. The protein localises to the cilium. Its subcellular location is the photoreceptor outer segment. It localises to the photoreceptor inner segment. Inhibits the transcriptional activation activity of the cone-rod homeobox CRX. May participate in the regulation of visual phototransduction or in the integration of photoreceptor metabolism. The chain is Phosducin (PDC) from Felis catus (Cat).